The chain runs to 229 residues: Endonuclease NucS (229 aa).

This sequence belongs to the NucS endonuclease family.

It localises to the cytoplasm. Functionally, cleaves both 3' and 5' ssDNA extremities of branched DNA structures. The chain is Endonuclease NucS from Corynebacterium diphtheriae (strain ATCC 700971 / NCTC 13129 / Biotype gravis).